We begin with the raw amino-acid sequence, 197 residues long: ATP-dependent Clp protease proteolytic subunit (197 aa).

S98 serves as the catalytic Nucleophile. H123 is a catalytic residue.

The protein belongs to the peptidase S14 family. As to quaternary structure, fourteen ClpP subunits assemble into 2 heptameric rings which stack back to back to give a disk-like structure with a central cavity, resembling the structure of eukaryotic proteasomes.

Its subcellular location is the cytoplasm. It carries out the reaction Hydrolysis of proteins to small peptides in the presence of ATP and magnesium. alpha-casein is the usual test substrate. In the absence of ATP, only oligopeptides shorter than five residues are hydrolyzed (such as succinyl-Leu-Tyr-|-NHMec, and Leu-Tyr-Leu-|-Tyr-Trp, in which cleavage of the -Tyr-|-Leu- and -Tyr-|-Trp bonds also occurs).. Cleaves peptides in various proteins in a process that requires ATP hydrolysis. Has a chymotrypsin-like activity. Plays a major role in the degradation of misfolded proteins. In Lysinibacillus sphaericus (strain C3-41), this protein is ATP-dependent Clp protease proteolytic subunit.